A 129-amino-acid chain; its full sequence is MSHLQNLLLDTLLGTKHVDSAALIKLQEKTLCVTSPGFSVMPSDVRTLLNGFAKNPLLTRREGLYFKEKDYKCVRADDYSLYAKNENTGVVVVKTNMYLVVATYTAGMYPSVCVEATEKLGEYLRKKGN.

Belongs to the profilin family. As to expression, expressed in testis, in germ cells in seminiferous tubules (at protein level).

Its subcellular location is the cytoplasm. Involved in male fertility. Required for manchette development and acrosome biogenesis during spermiogenesis. Binds in vitro to phospholipids, including phosphatidylinositol 3-phosphate (PtdIns(3)P), phosphatidylinositol 4,5-bisphosphate (PtdIns(4,5)P2), phosphatidylinositol 4-phosphate (PtdIns(4)P) and phosphatidic acid (PA). Contrary to other profilin family members, does not bind to actin in vitro. The protein is Profilin-4 (Pfn4) of Mus musculus (Mouse).